Here is a 508-residue protein sequence, read N- to C-terminus: MIGFSAFILRNYYAAIGWNEDNLYSSLTRTSSALLDFQLPQSLILQLANSPTPIFFTSYALDALPQLNGSISYITTSMPLDEIGSGRATAFKNVIERFRVFPPPKRPQPKDEVWLGGKRIEGRDYLLYSRLHLPSLHLSGLATTRLTPTLQAHLAFLSQPAHPTSTRPTPPQTPPSHTRQPSEPSTPAPSPTPGNVFISLQHDTGRYCGEYTYSVQDGMVGLRTLYNFGWHGDEESEVDKKERREREGKRIDEEEMMEGGLKGRFSAGGEVYFSAKQRSFGISTGLRFTTVPPTLPLPLNAPVPSPPTTLTLLYNPLIGFLSSAYSAQVSPTVALATRFGVNVYSYESDLSVGGEWWIGRRRGKRGLTTDAEPQLDAESRDPVVTGIEENRELTEKMAQRASLRQVTLRDEIGEDVHAEKELYSPIPAMTDVNAGELAQQISPRLQPQQDLDDERDGVLKARLSGNWQFALLYEARIRNCLVSAGVLADLTGRQHPIRSIGLEVQYFS.

A disordered region spans residues 160 to 195 (PAHPTSTRPTPPQTPPSHTRQPSEPSTPAPSPTPGN).

This sequence belongs to the MDM10 family. As to quaternary structure, component of the ER-mitochondria encounter structure (ERMES) or MDM complex, composed of MMM1, MDM10, MDM12 and MDM34. Associates with the mitochondrial outer membrane sorting assembly machinery SAM(core) complex.

Its subcellular location is the mitochondrion outer membrane. Functionally, component of the ERMES/MDM complex, which serves as a molecular tether to connect the endoplasmic reticulum and mitochondria. Components of this complex are involved in the control of mitochondrial shape and protein biogenesis and may function in phospholipid exchange. MDM10 is involved in the late assembly steps of the general translocase of the mitochondrial outer membrane (TOM complex). Functions in the TOM40-specific route of the assembly of outer membrane beta-barrel proteins, including the association of TOM40 with the receptor TOM22 and small TOM proteins. Can associate with the SAM(core) complex as well as the MDM12-MMM1 complex, both involved in late steps of the major beta-barrel assembly pathway, that is responsible for biogenesis of all outer membrane beta-barrel proteins. May act as a switch that shuttles between both complexes and channels precursor proteins into the TOM40-specific pathway. Plays a role in mitochondrial morphology and in the inheritance of mitochondria. The protein is Mitochondrial distribution and morphology protein 10 of Cryptococcus neoformans var. neoformans serotype D (strain B-3501A) (Filobasidiella neoformans).